A 346-amino-acid polypeptide reads, in one-letter code: MNNLKWVVYFLKSRKNWIFWILFLNILMLGISLIDYDFPIDSLFYIVSLNLSLTLIFLILTFFKEVKLYRHFEKDKEIEEIKHKDLAETPFQRHTVDYLYRQILAHKDKVVDQQLQLNMHEQTITEFVHDIKTPVTAMKLLIDQEENQERKQALLFEWSRINSMLDTQLYITRLESQRKDMFFDYVSLKRMVIDEIQLTRHISQVKGIGFDIDFKVDNHVYTDIKWCRMIIRQILSNALKYSENYNVDISTELIDQHVALIIKDHGRGISKKDMPRIFERGFTSTANRNETTSSGMGLYLVDSVKDQLGIQLQVTSTIGKGTTVKLIFPLQNEIVERMSEVTNLSF.

2 consecutive transmembrane segments (helical) span residues 18–38 (IFWI…DYDF) and 43–63 (LFYI…LTFF). The region spanning 126-332 (EFVHDIKTPV…TVKLIFPLQN (207 aa)) is the Histidine kinase domain.

Interacts with GraX.

It localises to the cell membrane. It catalyses the reaction ATP + protein L-histidine = ADP + protein N-phospho-L-histidine.. In terms of biological role, member of the two-component regulatory system GraR/GraS involved in resistance against cationic antimicrobial peptides (CAMPs). Functions as a sensor protein kinase which phosphorylates GraR through the auxiliary protein GraX. In turn, GraR up-regulates many genes such as adhesins, exoproteins, transporters, toxins, and proteins involved in cell wall synthesis. Down-regulates the expression of many genes involved in RNA and amino acid synthesis or glycolysis. The chain is Sensor protein kinase GraS (graS) from Staphylococcus aureus (strain MRSA252).